Reading from the N-terminus, the 524-residue chain is Chromosomal replication initiator protein DnaA (524 aa).

A domain I, interacts with DnaA modulators region spans residues 1-105; that stretch reads MSQNSSSLLE…EQEIPETPAQ (105 aa). The segment at 95-183 is disordered; the sequence is PEQEIPETPA…PAHNPNREVS (89 aa). Residues 106–182 form a domain II region; the sequence is QEFKYQPDAP…TPAHNPNREV (77 aa). The span at 148-158 shows a compositional bias: pro residues; the sequence is APEPHPAPIAD. The tract at residues 183-399 is domain III, AAA+ region; sequence SLNPKYTFES…GALIRVSAYS (217 aa). Positions 227, 229, 230, and 231 each coordinate ATP. The domain IV, binds dsDNA stretch occupies residues 400-524; it reads SLINQPIDKE…TQLIKSRGRN (125 aa).

Belongs to the DnaA family. As to quaternary structure, oligomerizes as a right-handed, spiral filament on DNA at oriC.

The protein localises to the cytoplasm. Plays an essential role in the initiation and regulation of chromosomal replication. ATP-DnaA binds to the origin of replication (oriC) to initiate formation of the DNA replication initiation complex once per cell cycle. Binds the DnaA box (a 9 base pair repeat at the origin) and separates the double-stranded (ds)DNA. Forms a right-handed helical filament on oriC DNA; dsDNA binds to the exterior of the filament while single-stranded (ss)DNA is stabiized in the filament's interior. The ATP-DnaA-oriC complex binds and stabilizes one strand of the AT-rich DNA unwinding element (DUE), permitting loading of DNA polymerase. After initiation quickly degrades to an ADP-DnaA complex that is not apt for DNA replication. Binds acidic phospholipids. In Corynebacterium glutamicum (strain R), this protein is Chromosomal replication initiator protein DnaA.